The following is a 297-amino-acid chain: 4-hydroxy-tetrahydrodipicolinate synthase (297 aa).

Thr47 serves as a coordination point for pyruvate. Tyr135 serves as the catalytic Proton donor/acceptor. Lys163 (schiff-base intermediate with substrate) is an active-site residue. Residue Ile205 participates in pyruvate binding.

This sequence belongs to the DapA family. In terms of assembly, homotetramer; dimer of dimers.

The protein resides in the cytoplasm. The enzyme catalyses L-aspartate 4-semialdehyde + pyruvate = (2S,4S)-4-hydroxy-2,3,4,5-tetrahydrodipicolinate + H2O + H(+). Its pathway is amino-acid biosynthesis; L-lysine biosynthesis via DAP pathway; (S)-tetrahydrodipicolinate from L-aspartate: step 3/4. Its function is as follows. Catalyzes the condensation of (S)-aspartate-beta-semialdehyde [(S)-ASA] and pyruvate to 4-hydroxy-tetrahydrodipicolinate (HTPA). This chain is 4-hydroxy-tetrahydrodipicolinate synthase, found in Dehalococcoides mccartyi (strain CBDB1).